A 274-amino-acid polypeptide reads, in one-letter code: Rhamnulose-1-phosphate aldolase (274 aa).

The active site involves glutamate 117. Histidine 141, histidine 143, and histidine 212 together coordinate Zn(2+).

It belongs to the aldolase class II family. RhaD subfamily. As to quaternary structure, homotetramer. Zn(2+) is required as a cofactor.

The protein resides in the cytoplasm. The catalysed reaction is L-rhamnulose 1-phosphate = (S)-lactaldehyde + dihydroxyacetone phosphate. The protein operates within carbohydrate degradation; L-rhamnose degradation; glycerone phosphate from L-rhamnose: step 3/3. Functionally, catalyzes the reversible cleavage of L-rhamnulose-1-phosphate to dihydroxyacetone phosphate (DHAP) and L-lactaldehyde. The polypeptide is Rhamnulose-1-phosphate aldolase (Escherichia coli O6:H1 (strain CFT073 / ATCC 700928 / UPEC)).